Consider the following 1092-residue polypeptide: SUMO-specific isopeptidase USPL1 (1092 aa).

Disordered stretches follow at residues 145 to 168 (VYDETSSNLPDSSGQQNPIRTADS) and 185 to 207 (TKDPATVDVSGTGRPSPQNEGCT). Composition is skewed to polar residues over residues 148 to 163 (ETSSNLPDSSGQQNPI) and 197 to 206 (GRPSPQNEGC). The USP domain maps to 227–500 (VQWKNAYALC…EIHIVIWERK (274 aa)). Residue C236 is the Nucleophile of the active site. The SUMO-binding stretch occupies residues 236 to 495 (CWLDCILSAL…EVPASEIHIV (260 aa)). The active-site Proton acceptor is H456. Disordered stretches follow at residues 713-749 (LKPERVTSQVSNLKKKETTADSQTTTSKSLQNQSLKE), 797-859 (GGFK…STSC), and 904-930 (AALMSSPQSRTVRSENLEQVPQDGSPN). A compositionally biased stretch (polar residues) spans 732–748 (ADSQTTTSKSLQNQSLK). Positions 810-819 (HVSKKARKSA) are enriched in basic residues. Residues 821–832 (KPPPISKPPAGP) show a composition bias toward pro residues. Position 909 is a phosphoserine (S909).

Belongs to the peptidase C19 family. In terms of assembly, interacts with ELL.

It localises to the nucleus. The protein resides in the cajal body. SUMO-specific isopeptidase involved in protein desumoylation. Specifically binds SUMO proteins with a higher affinity for SUMO2 and SUMO3 which it cleaves more efficiently. Also able to process full-length SUMO proteins to their mature forms. Plays a key role in RNA polymerase-II-mediated snRNA transcription in the Cajal bodies. Is a component of complexes that can bind to U snRNA genes. The polypeptide is SUMO-specific isopeptidase USPL1 (USPL1) (Homo sapiens (Human)).